A 615-amino-acid polypeptide reads, in one-letter code: RUN domain-containing protein 1 (615 aa).

The interval 15–41 (TAVGPKAKDEEEEEEEEESLPPCETVR) is disordered. The span at 24–33 (EEEEEEEEES) shows a compositional bias: acidic residues. At Ser73 the chain carries Phosphoserine. Coiled coils occupy residues 76-102 (DATV…LSSH) and 163-238 (RVRG…NLNE). The tract at residues 147–180 (DPCGGDESDVLPGDRPRVRGEDQSEQEKRERLET) is disordered. Basic and acidic residues predominate over residues 158 to 180 (PGDRPRVRGEDQSEQEKRERLET). The RUN domain maps to 423-604 (ELTTVVRKEL…LKFSLPVDLA (182 aa)). Ser499 carries the phosphoserine modification.

In terms of biological role, may play a role as p53/TP53 inhibitor and thus may have oncogenic activity. The polypeptide is RUN domain-containing protein 1 (Rundc1) (Mus musculus (Mouse)).